A 371-amino-acid chain; its full sequence is Bifunctional enzyme IspD/IspF (371 aa).

Residues 1–210 (MSEMSLIMLA…LNLPTPSFEI (210 aa)) form a 2-C-methyl-D-erythritol 4-phosphate cytidylyltransferase region. The segment at 211–371 (FTGNGFDVHE…NLKYFDWTRL (161 aa)) is 2-C-methyl-D-erythritol 2,4-cyclodiphosphate synthase. Asp217 and His219 together coordinate a divalent metal cation. 4-CDP-2-C-methyl-D-erythritol 2-phosphate contacts are provided by residues 217 to 219 (DVH) and 243 to 244 (HS). His251 contributes to the a divalent metal cation binding site. 4-CDP-2-C-methyl-D-erythritol 2-phosphate contacts are provided by residues 265-267 (DIG), 270-274 (YPDTD), 341-344 (TTTE), Phe348, and Arg351.

This sequence in the N-terminal section; belongs to the IspD/TarI cytidylyltransferase family. IspD subfamily. In the C-terminal section; belongs to the IspF family. Requires a divalent metal cation as cofactor.

It catalyses the reaction 2-C-methyl-D-erythritol 4-phosphate + CTP + H(+) = 4-CDP-2-C-methyl-D-erythritol + diphosphate. The catalysed reaction is 4-CDP-2-C-methyl-D-erythritol 2-phosphate = 2-C-methyl-D-erythritol 2,4-cyclic diphosphate + CMP. It participates in isoprenoid biosynthesis; isopentenyl diphosphate biosynthesis via DXP pathway; isopentenyl diphosphate from 1-deoxy-D-xylulose 5-phosphate: step 2/6. Its pathway is isoprenoid biosynthesis; isopentenyl diphosphate biosynthesis via DXP pathway; isopentenyl diphosphate from 1-deoxy-D-xylulose 5-phosphate: step 4/6. Functionally, bifunctional enzyme that catalyzes the formation of 4-diphosphocytidyl-2-C-methyl-D-erythritol from CTP and 2-C-methyl-D-erythritol 4-phosphate (MEP) (IspD), and catalyzes the conversion of 4-diphosphocytidyl-2-C-methyl-D-erythritol 2-phosphate (CDP-ME2P) to 2-C-methyl-D-erythritol 2,4-cyclodiphosphate (ME-CPP) with a corresponding release of cytidine 5-monophosphate (CMP) (IspF). The sequence is that of Bifunctional enzyme IspD/IspF from Campylobacter jejuni (strain RM1221).